The primary structure comprises 183 residues: UPF0316 protein EF_1609 (183 aa).

3 consecutive transmembrane segments (helical) span residues M1 to L21, V35 to V55, and P62 to I82.

Belongs to the UPF0316 family.

It localises to the cell membrane. In Enterococcus faecalis (strain ATCC 700802 / V583), this protein is UPF0316 protein EF_1609.